Consider the following 93-residue polypeptide: UPF0298 protein LMHCC_0506 (93 aa).

Belongs to the UPF0298 family.

It localises to the cytoplasm. The polypeptide is UPF0298 protein LMHCC_0506 (Listeria monocytogenes serotype 4a (strain HCC23)).